The chain runs to 417 residues: Riboflavin biosynthesis protein RibBA (417 aa).

A DHBP synthase region spans residues 1–204 (MTRLDSIERA…IADLIEWRRK (204 aa)). Residues 28–29 (RE), D33, 141–145 (RPGHT), and E165 contribute to the D-ribulose 5-phosphate site. Residue E29 participates in Mg(2+) binding. H144 serves as a coordination point for Mg(2+). Residues 205 to 417 (HEKHVQRIAE…LDDHPEADGA (213 aa)) form a GTP cyclohydrolase II region. 259–263 (RVHSE) contacts GTP. 3 residues coordinate Zn(2+): C264, C275, and C277. GTP is bound by residues Q280, 303 to 305 (EGR), and T325. D337 functions as the Proton acceptor; for GTP cyclohydrolase activity in the catalytic mechanism. Catalysis depends on R339, which acts as the Nucleophile; for GTP cyclohydrolase activity. The GTP site is built by T360 and K365.

The protein in the N-terminal section; belongs to the DHBP synthase family. This sequence in the C-terminal section; belongs to the GTP cyclohydrolase II family. It depends on Mg(2+) as a cofactor. Requires Mn(2+) as cofactor. Zn(2+) is required as a cofactor.

The enzyme catalyses D-ribulose 5-phosphate = (2S)-2-hydroxy-3-oxobutyl phosphate + formate + H(+). The catalysed reaction is GTP + 4 H2O = 2,5-diamino-6-hydroxy-4-(5-phosphoribosylamino)-pyrimidine + formate + 2 phosphate + 3 H(+). Its pathway is cofactor biosynthesis; riboflavin biosynthesis; 2-hydroxy-3-oxobutyl phosphate from D-ribulose 5-phosphate: step 1/1. The protein operates within cofactor biosynthesis; riboflavin biosynthesis; 5-amino-6-(D-ribitylamino)uracil from GTP: step 1/4. Its function is as follows. Catalyzes the conversion of D-ribulose 5-phosphate to formate and 3,4-dihydroxy-2-butanone 4-phosphate. In terms of biological role, catalyzes the conversion of GTP to 2,5-diamino-6-ribosylamino-4(3H)-pyrimidinone 5'-phosphate (DARP), formate and pyrophosphate. This is Riboflavin biosynthesis protein RibBA from Mycobacteroides abscessus (strain ATCC 19977 / DSM 44196 / CCUG 20993 / CIP 104536 / JCM 13569 / NCTC 13031 / TMC 1543 / L948) (Mycobacterium abscessus).